The chain runs to 682 residues: Two-component system protein A (682 aa).

The disordered stretch occupies residues 11–41 (SLDDNDNGQQHQDEVQAKHQDQGHTCPSRPS). The segment covering 21–32 (HQDEVQAKHQDQ) has biased composition (basic and acidic residues). PAS domains follow at residues 45-105 (LSRI…PILY) and 166-239 (MNET…LREG). A PAC domain is found at 241–292 (IEDEGWRYRRDGSRFWANVLITPIYQFGQHVGFVKVTRDLTERKEAEACMIA). A Histidine kinase domain is found at 307–530 (NISHEIRTPM…VFWFTAKMGG (224 aa)). His310 bears the Phosphohistidine; by autocatalysis mark. The Response regulatory domain maps to 563–680 (HVLLVEDNIV…QLLRVLWKWF (118 aa)). Asp615 is subject to 4-aspartylphosphate.

Activation probably requires a transfer of a phosphate group between a His in the histidine kinase domain and an Asp of the response regulatory domain.

It localises to the cytoplasm. It catalyses the reaction ATP + protein L-histidine = ADP + protein N-phospho-L-histidine.. May be part of a two-component regulatory system required for formation of conidia on certain growth media. This is Two-component system protein A from Emericella nidulans (strain FGSC A4 / ATCC 38163 / CBS 112.46 / NRRL 194 / M139) (Aspergillus nidulans).